Consider the following 732-residue polypeptide: Copper-transporting ATPase (732 aa).

At 1–88 (MTKAQFYIEG…NPSFLTPNVK (88 aa)) the chain is on the cytoplasmic side. The HMA domain occupies 2–68 (TKAQFYIEGM…QIEKLGYQPR (67 aa)). Cu(+) is bound by residues C13 and C16. Residues 89–109 (LALVLLGTLGVLALSMFAPLL) traverse the membrane as a helical segment. Over 110–122 (PLPSFLKNPFING) the chain is Extracellular. Residues 123–142 (IVQLVLSLMVMHMGRNFYVH) traverse the membrane as a helical segment. The Cytoplasmic segment spans residues 143–149 (GFKALWA). Residues 150 to 170 (RQPNMDSLIALGTSAALLYSL) form a helical membrane-spanning segment. Residues 171-187 (VLLFRAYTHAPIEGYYF) lie on the Extracellular side of the membrane. A helical membrane pass occupies residues 188-208 (ESVCVILLFVMAGKRVEENSK). At 209–336 (DKALEAMQSL…KAPIARLADK (128 aa)) the chain is on the cytoplasmic side. Residues 337–359 (VAGVFVPIVIGIASIAFLVWLVL) form a helical membrane-spanning segment. Residues 360 to 365 (GDFTRA) are Extracellular-facing. A helical transmembrane segment spans residues 366 to 383 (LEVFIAILVISCPCALGL). Over 384 to 663 (ATPMALLVAQ…KLSALTIANI (280 aa)) the chain is Cytoplasmic. D421 acts as the 4-aspartylphosphate intermediate in catalysis. Residues D609 and D613 each contribute to the Mg(2+) site. A helical membrane pass occupies residues 664–683 (KQNLFWAFCYNSIAIPLACG). The Extracellular portion of the chain corresponds to 684-694 (VAYKLGIMFNP). The chain crosses the membrane as a helical span at residues 695-713 (MLASLAMSLSSVSVVLNAQ). Over 714–732 (RLRGAHFKIRGSHENRHSS) the chain is Cytoplasmic.

It belongs to the cation transport ATPase (P-type) (TC 3.A.3) family. Type IB subfamily.

Its subcellular location is the cell membrane. It carries out the reaction Cu(+)(in) + ATP + H2O = Cu(+)(out) + ADP + phosphate + H(+). In terms of biological role, probably involved in copper export. This chain is Copper-transporting ATPase (copA), found in Helicobacter felis (strain ATCC 49179 / CCUG 28539 / NCTC 12436 / CS1).